A 465-amino-acid polypeptide reads, in one-letter code: MAP kinase-interacting serine/threonine-protein kinase 1 (465 aa).

Positions 1–11 (MVSSQKLEKPI) are enriched in basic and acidic residues. The segment at 1 to 40 (MVSSQKLEKPIEMGSSEPLPIADGDRRRKKKRRGRATDSL) is disordered. The residue at position 39 (S39) is a Phosphoserine. In terms of domain architecture, Protein kinase spans 49-374 (KLTSELLGEG…AAQVLQHPWV (326 aa)). ATP-binding positions include 55–63 (LGEGAYAKV) and K78. Residues 185–203 (APTSLGSSDPPTSASQVAG) show a composition bias toward polar residues. Positions 185–204 (APTSLGSSDPPTSASQVAGT) are disordered. D211 functions as the Proton acceptor in the catalytic mechanism. Residues S221 and S226 each carry the phosphoserine modification. Residues T250, T255, and T385 each carry the phosphothreonine modification. Residues 446 to 465 (RRRALAQAGRGEDRSPPTAL) form a disordered region. Residues 455 to 465 (RGEDRSPPTAL) show a composition bias toward basic and acidic residues. Phosphoserine is present on S460.

This sequence belongs to the protein kinase superfamily. CAMK Ser/Thr protein kinase family. Interacts with the C-terminal regions of EIF4G1 and EIF4G2. Also binds to dephosphorylated ERK1 and ERK2, and to the p38 kinases. Requires Mg(2+) as cofactor. Dual phosphorylation of Thr-250 and Thr-255 activates the kinase. Phosphorylation of Thr-385 activates the kinase. MAPK3/ERK1 is one of the kinases which activate MKNK1/MNK1. Phosphorylation by PAK2 leads to a reduced phosphorylation of EIF4G1. As to expression, ubiquitous.

Its subcellular location is the cytoplasm. It is found in the nucleus. The catalysed reaction is L-seryl-[protein] + ATP = O-phospho-L-seryl-[protein] + ADP + H(+). It catalyses the reaction L-threonyl-[protein] + ATP = O-phospho-L-threonyl-[protein] + ADP + H(+). Its activity is regulated as follows. Phosphorylated and activated by the p38 kinases and kinases in the Erk pathway. Functionally, may play a role in the response to environmental stress and cytokines. Appears to regulate translation by phosphorylating EIF4E, thus increasing the affinity of this protein for the 7-methylguanosine-containing mRNA cap. The protein is MAP kinase-interacting serine/threonine-protein kinase 1 (MKNK1) of Homo sapiens (Human).